The sequence spans 298 residues: Lipoyl synthase (298 aa).

[4Fe-4S] cluster contacts are provided by Cys43, Cys48, Cys54, Cys69, Cys73, Cys76, and Ser280. The Radical SAM core domain occupies 55–269 (FSSGTATFLI…AACGRGMGIP (215 aa)).

The protein belongs to the radical SAM superfamily. Lipoyl synthase family. The cofactor is [4Fe-4S] cluster.

The protein resides in the cytoplasm. It carries out the reaction [[Fe-S] cluster scaffold protein carrying a second [4Fe-4S](2+) cluster] + N(6)-octanoyl-L-lysyl-[protein] + 2 oxidized [2Fe-2S]-[ferredoxin] + 2 S-adenosyl-L-methionine + 4 H(+) = [[Fe-S] cluster scaffold protein] + N(6)-[(R)-dihydrolipoyl]-L-lysyl-[protein] + 4 Fe(3+) + 2 hydrogen sulfide + 2 5'-deoxyadenosine + 2 L-methionine + 2 reduced [2Fe-2S]-[ferredoxin]. It functions in the pathway protein modification; protein lipoylation via endogenous pathway; protein N(6)-(lipoyl)lysine from octanoyl-[acyl-carrier-protein]: step 2/2. Functionally, catalyzes the radical-mediated insertion of two sulfur atoms into the C-6 and C-8 positions of the octanoyl moiety bound to the lipoyl domains of lipoate-dependent enzymes, thereby converting the octanoylated domains into lipoylated derivatives. The sequence is that of Lipoyl synthase from Nitratidesulfovibrio vulgaris (strain ATCC 29579 / DSM 644 / CCUG 34227 / NCIMB 8303 / VKM B-1760 / Hildenborough) (Desulfovibrio vulgaris).